The following is a 566-amino-acid chain: Viral IRF3-like protein (566 aa).

Disordered stretches follow at residues 151–170 (PRPF…PAFC) and 176–236 (QTGA…VHTD).

Belongs to the IRF family. In terms of assembly, interacts with host SKP2. Interacts with host USP7.

In terms of biological role, plays a role in the inhibition of host immune response. Interferes with the transactivating potential of cellular IRFs IRF3 and IRF7 that play a critical role in the induction of IFNA and IFNB genes. Additionally, interferes with surface major histocompatibility complex class II (MHC-II) antigen presentation. The sequence is that of Viral IRF3-like protein (vIRF-3) from Human herpesvirus 8 type P (isolate GK18) (HHV-8).